The following is a 155-amino-acid chain: Small ribosomal subunit protein uS7c (155 aa).

This sequence belongs to the universal ribosomal protein uS7 family. Part of the 30S ribosomal subunit.

It is found in the plastid. The protein localises to the chloroplast. Its function is as follows. One of the primary rRNA binding proteins, it binds directly to 16S rRNA where it nucleates assembly of the head domain of the 30S subunit. The sequence is that of Small ribosomal subunit protein uS7c (rps7) from Chaetosphaeridium globosum (Charophycean green alga).